Here is a 425-residue protein sequence, read N- to C-terminus: Gamma-glutamyl phosphate reductase (425 aa).

The protein belongs to the gamma-glutamyl phosphate reductase family.

The protein localises to the cytoplasm. The enzyme catalyses L-glutamate 5-semialdehyde + phosphate + NADP(+) = L-glutamyl 5-phosphate + NADPH + H(+). It participates in amino-acid biosynthesis; L-proline biosynthesis; L-glutamate 5-semialdehyde from L-glutamate: step 2/2. Its function is as follows. Catalyzes the NADPH-dependent reduction of L-glutamate 5-phosphate into L-glutamate 5-semialdehyde and phosphate. The product spontaneously undergoes cyclization to form 1-pyrroline-5-carboxylate. This Novosphingobium aromaticivorans (strain ATCC 700278 / DSM 12444 / CCUG 56034 / CIP 105152 / NBRC 16084 / F199) protein is Gamma-glutamyl phosphate reductase.